We begin with the raw amino-acid sequence, 72 residues long: Phosphonoacetate hydrolase (72 aa).

Monomer. It depends on Unlike bacterial phosphonoacetate hydrolase, does not require zinc as a cofactor. as a cofactor.

The enzyme catalyses phosphonoacetate + H2O = acetate + phosphate + H(+). Unaffected by EDTA or Ca(2+), Co(2+), Cu(2+), Mg(2+), Mn(2+), Ni(2+) and Zn(2+). The protein is Phosphonoacetate hydrolase of Penicillium oxalicum.